Here is a 464-residue protein sequence, read N- to C-terminus: UDP-N-acetylmuramoyl-tripeptide--D-alanyl-D-alanine ligase (464 aa).

An ATP-binding site is contributed by Gly-125–Thr-131.

It belongs to the MurCDEF family. MurF subfamily.

It is found in the cytoplasm. The enzyme catalyses D-alanyl-D-alanine + UDP-N-acetyl-alpha-D-muramoyl-L-alanyl-gamma-D-glutamyl-meso-2,6-diaminopimelate + ATP = UDP-N-acetyl-alpha-D-muramoyl-L-alanyl-gamma-D-glutamyl-meso-2,6-diaminopimeloyl-D-alanyl-D-alanine + ADP + phosphate + H(+). It participates in cell wall biogenesis; peptidoglycan biosynthesis. Functionally, involved in cell wall formation. Catalyzes the final step in the synthesis of UDP-N-acetylmuramoyl-pentapeptide, the precursor of murein. The polypeptide is UDP-N-acetylmuramoyl-tripeptide--D-alanyl-D-alanine ligase (Borreliella burgdorferi (strain ATCC 35210 / DSM 4680 / CIP 102532 / B31) (Borrelia burgdorferi)).